Reading from the N-terminus, the 173-residue chain is Small ribosomal subunit protein uS5 (173 aa).

Positions 17–80 constitute an S5 DRBM domain; it reads WQERVIQIRR…ADGKKQLIEV (64 aa).

Belongs to the universal ribosomal protein uS5 family. As to quaternary structure, part of the 30S ribosomal subunit. Contacts proteins S4 and S8.

Functionally, with S4 and S12 plays an important role in translational accuracy. Its function is as follows. Located at the back of the 30S subunit body where it stabilizes the conformation of the head with respect to the body. The protein is Small ribosomal subunit protein uS5 of Microcystis aeruginosa (strain NIES-843 / IAM M-2473).